A 715-amino-acid chain; its full sequence is Beta-galactosidase 9 (715 aa).

Positions 1–20 (MSGGAVAFLLLVAAAAVANA) are cleaved as a signal peptide. E178 functions as the Proton donor in the catalytic mechanism. The active-site Nucleophile is E247.

Belongs to the glycosyl hydrolase 35 family.

Its subcellular location is the secreted. It localises to the extracellular space. The protein resides in the apoplast. It catalyses the reaction Hydrolysis of terminal non-reducing beta-D-galactose residues in beta-D-galactosides.. The protein is Beta-galactosidase 9 of Oryza sativa subsp. japonica (Rice).